We begin with the raw amino-acid sequence, 378 residues long: Phosphoserine aminotransferase (378 aa).

L-glutamate is bound at residue arginine 53. Pyridoxal 5'-phosphate-binding residues include tryptophan 117, threonine 167, aspartate 190, and glutamine 213. N6-(pyridoxal phosphate)lysine is present on lysine 214. A pyridoxal 5'-phosphate-binding site is contributed by 255–256; the sequence is NT.

The protein belongs to the class-V pyridoxal-phosphate-dependent aminotransferase family. SerC subfamily. As to quaternary structure, homodimer. Requires pyridoxal 5'-phosphate as cofactor.

The protein resides in the cytoplasm. It catalyses the reaction O-phospho-L-serine + 2-oxoglutarate = 3-phosphooxypyruvate + L-glutamate. The catalysed reaction is 4-(phosphooxy)-L-threonine + 2-oxoglutarate = (R)-3-hydroxy-2-oxo-4-phosphooxybutanoate + L-glutamate. It functions in the pathway amino-acid biosynthesis; L-serine biosynthesis; L-serine from 3-phospho-D-glycerate: step 2/3. Its pathway is cofactor biosynthesis; pyridoxine 5'-phosphate biosynthesis; pyridoxine 5'-phosphate from D-erythrose 4-phosphate: step 3/5. In terms of biological role, catalyzes the reversible conversion of 3-phosphohydroxypyruvate to phosphoserine and of 3-hydroxy-2-oxo-4-phosphonooxybutanoate to phosphohydroxythreonine. In Ralstonia pickettii (strain 12J), this protein is Phosphoserine aminotransferase.